The following is a 77-amino-acid chain: uncharacterized protein (77 aa).

It is found in the plastid. It localises to the cyanelle. This is an uncharacterized protein from Cyanophora paradoxa.